Reading from the N-terminus, the 153-residue chain is Histone H2B.3 (153 aa).

The span at Met-1 to Pro-28 shows a compositional bias: basic and acidic residues. Positions Met-1–Lys-60 are disordered. Lys-7 and Lys-37 each carry N6-acetyllysine. Residue Lys-149 forms a Glycyl lysine isopeptide (Lys-Gly) (interchain with G-Cter in ubiquitin) linkage.

It belongs to the histone H2B family. In terms of assembly, the nucleosome is a histone octamer containing two molecules each of H2A, H2B, H3 and H4 assembled in one H3-H4 heterotetramer and two H2A-H2B heterodimers. The octamer wraps approximately 147 bp of DNA. In terms of processing, can be acetylated to form H2BK6ac and H2BK33ac. Post-translationally, monoubiquitinated to form H2BK143ub1; may give a specific tag for epigenetic transcriptional activation.

The protein resides in the nucleus. The protein localises to the chromosome. Core component of nucleosome. Nucleosomes wrap and compact DNA into chromatin, limiting DNA accessibility to the cellular machineries which require DNA as a template. Histones thereby play a central role in transcription regulation, DNA repair, DNA replication and chromosomal stability. DNA accessibility is regulated via a complex set of post-translational modifications of histones, also called histone code, and nucleosome remodeling. The sequence is that of Histone H2B.3 from Zea mays (Maize).